A 367-amino-acid chain; its full sequence is Phosphoribosylaminoimidazole-succinocarboxamide synthase (367 aa).

The protein belongs to the SAICAR synthetase family.

It carries out the reaction 5-amino-1-(5-phospho-D-ribosyl)imidazole-4-carboxylate + L-aspartate + ATP = (2S)-2-[5-amino-1-(5-phospho-beta-D-ribosyl)imidazole-4-carboxamido]succinate + ADP + phosphate + 2 H(+). It functions in the pathway purine metabolism; IMP biosynthesis via de novo pathway; 5-amino-1-(5-phospho-D-ribosyl)imidazole-4-carboxamide from 5-amino-1-(5-phospho-D-ribosyl)imidazole-4-carboxylate: step 1/2. The chain is Phosphoribosylaminoimidazole-succinocarboxamide synthase from Shewanella amazonensis (strain ATCC BAA-1098 / SB2B).